We begin with the raw amino-acid sequence, 228 residues long: Gliolectin (228 aa).

Topologically, residues 1–120 (MLCPPMALGP…NPKAVSQAPR (120 aa)) are cytoplasmic. Residues 121–137 (GMALTPAQISASAKLIL) form a helical; Signal-anchor for type II membrane protein membrane-spanning segment. The Extracellular segment spans residues 138 to 228 (QKCPESDRKK…GTSELADQKQ (91 aa)). A disordered region spans residues 141-228 (PESDRKKSNG…GTSELADQKQ (88 aa)). N-linked (GlcNAc...) asparagine glycosylation is found at Asn149, Asn156, Asn198, Asn199, Asn205, and Asn218. Residues 195–213 (NNNNNSSSSNNNSNMNINN) are compositionally biased toward low complexity. The span at 218-228 (NGTSELADQKQ) shows a compositional bias: polar residues.

Expressed by a subset of glial cells found at the midline of the embryo stage 12 nervous system. Expression is highest during the formation of the embryonic axonal commissures, a process requiring midline glial cell function (at protein level).

The protein localises to the membrane. Has a role in intercellular carbohydrate-mediated cell adhesion. The protein is Gliolectin of Drosophila melanogaster (Fruit fly).